A 273-amino-acid chain; its full sequence is Translation initiation factor 2 subunit alpha (273 aa).

The S1 motif domain occupies 12–83 (GEFVVATVKN…EKGHIDLSLK (72 aa)).

This sequence belongs to the eIF-2-alpha family. Heterotrimer composed of an alpha, a beta and a gamma chain.

Its function is as follows. eIF-2 functions in the early steps of protein synthesis by forming a ternary complex with GTP and initiator tRNA. This is Translation initiation factor 2 subunit alpha from Thermococcus gammatolerans (strain DSM 15229 / JCM 11827 / EJ3).